The chain runs to 246 residues: MLIKTEGFVLRNRKYGETDSMLVIFTKKVGKINAIAKGARRTKSALLAGVQPFSYSDFVLFKGRSLYTVNQTEPKEIFYNLREDVKRLSYAAYLLELVESVTEEGQTNNRLFNLLGRTLHLMKKEEIELETILRAFELKLMEYSGLKPHLTSCVSCGQTSSNSWRFSSKEGGLICHQCHGIDSFSIKINVLTVKLANYLLAKDMEEIQKLKVNPYLHESLNKVLKQYIMVHLDRVNFNSLEIAKKI.

It belongs to the RecO family.

Its function is as follows. Involved in DNA repair and RecF pathway recombination. The protein is DNA repair protein RecO of Alkaliphilus metalliredigens (strain QYMF).